A 433-amino-acid polypeptide reads, in one-letter code: Enolase (433 aa).

Glutamine 167 provides a ligand contact to (2R)-2-phosphoglycerate. Glutamate 209 (proton donor) is an active-site residue. Mg(2+) contacts are provided by aspartate 246, glutamate 291, and aspartate 318. At lysine 326 the chain carries N6-acetyllysine. (2R)-2-phosphoglycerate is bound by residues lysine 343, arginine 372, serine 373, and lysine 394. The Proton acceptor role is filled by lysine 343. Lysine 343 bears the N6-(2-hydroxyisobutyryl)lysine mark.

Belongs to the enolase family. As to quaternary structure, component of the RNA degradosome, a multiprotein complex involved in RNA processing and mRNA degradation. The cofactor is Mg(2+). Acetylated and 2-hydroxyisobutyrylated at Lys-326 and Lys-343, respectively, reducing the enolase activity. Deacetylated and de-2-hydroxyisobutyrylated by NpdA/CobB, increasing the enolase activity.

Its subcellular location is the cytoplasm. The protein resides in the secreted. The protein localises to the cell surface. The enzyme catalyses (2R)-2-phosphoglycerate = phosphoenolpyruvate + H2O. Its pathway is carbohydrate degradation; glycolysis; pyruvate from D-glyceraldehyde 3-phosphate: step 4/5. Its function is as follows. Catalyzes the reversible conversion of 2-phosphoglycerate (2-PG) into phosphoenolpyruvate (PEP). It is essential for the degradation of carbohydrates via glycolysis. This chain is Enolase, found in Proteus mirabilis (strain HI4320).